A 650-amino-acid chain; its full sequence is Tudor domain-containing protein 3 (650 aa).

Residues 147 to 169 (TKTFGGGGNAGSNLNPGAGGSRN) form a disordered region. Residues 192–232 (LVDEKALRHITEMGFCKDAARQALMDHSNNVEAALNFLLTG) enclose the UBA domain. Disordered stretches follow at residues 233–271 (SKPK…APST), 286–406 (EDNK…SCNN), and 427–447 (HQNS…DQRY). 2 stretches are compositionally biased toward basic and acidic residues: residues 320–337 (TRND…RFQK) and 366–388 (HWME…KDFS). Over residues 390 to 406 (PPSNHQNEGSYRKSCNN) the composition is skewed to polar residues. A Tudor domain is found at 554 to 614 (SWRSGDECLA…RPIQAEAWEE (61 aa)). The segment at 616–650 (GEFGDSLDFRRGGDGQPRRSTRPTQQFYQPPRARN) is disordered. The segment covering 622–632 (LDFRRGGDGQP) has biased composition (basic and acidic residues).

Component of mRNA stress granules.

It localises to the cytoplasm. The protein resides in the nucleus. Functionally, scaffolding protein that specifically recognizes and binds dimethylarginine-containing proteins. Plays a role in the regulation of translation of target mRNAs by binding Arg/Gly-rich motifs (GAR) in dimethylarginine-containing proteins. In nucleus, acts as a coactivator: recognizes and binds asymmetric dimethylation on the core histone tails associated with transcriptional activation (H3R17me2a and H4R3me2a) and recruits proteins at these arginine-methylated loci. In cytoplasm, acts as an antiviral factor that participates in the assembly of stress granules together with G3BP1. This chain is Tudor domain-containing protein 3 (tdrd3), found in Xenopus laevis (African clawed frog).